Here is a 126-residue protein sequence, read N- to C-terminus: uncharacterized protein (126 aa).

Residues 5-25 traverse the membrane as a helical segment; sequence LIQHITSIFVFSFFFLFFFFS.

The protein localises to the membrane. This is an uncharacterized protein from Saccharomyces cerevisiae (strain ATCC 204508 / S288c) (Baker's yeast).